A 237-amino-acid chain; its full sequence is Probable transcriptional regulatory protein Fjoh_2560 (237 aa).

Belongs to the TACO1 family.

The protein localises to the cytoplasm. This Flavobacterium johnsoniae (strain ATCC 17061 / DSM 2064 / JCM 8514 / BCRC 14874 / CCUG 350202 / NBRC 14942 / NCIMB 11054 / UW101) (Cytophaga johnsonae) protein is Probable transcriptional regulatory protein Fjoh_2560.